Reading from the N-terminus, the 466-residue chain is Eukaryotic translation initiation factor 3 subunit M (466 aa).

Positions 40–62 (EISPLLEPLRQQEQSDAEPDRKQ) are disordered. One can recognise a PCI domain in the interval 211-378 (AQTHILQALQ…SEFLVHRATY (168 aa)). The segment at 424–466 (AAEEAAQGKSNDKGNKSGDRRQRHGNNQQSQQQQQPQEVAAAE) is disordered. Basic and acidic residues predominate over residues 433-443 (SNDKGNKSGDR). A compositionally biased stretch (low complexity) spans 451-460 (QQSQQQQQPQ).

It belongs to the eIF-3 subunit M family. As to quaternary structure, component of the eukaryotic translation initiation factor 3 (eIF-3) complex.

The protein localises to the cytoplasm. Component of the eukaryotic translation initiation factor 3 (eIF-3) complex, which is involved in protein synthesis of a specialized repertoire of mRNAs and, together with other initiation factors, stimulates binding of mRNA and methionyl-tRNAi to the 40S ribosome. The eIF-3 complex specifically targets and initiates translation of a subset of mRNAs involved in cell proliferation. This is Eukaryotic translation initiation factor 3 subunit M from Aspergillus oryzae (strain ATCC 42149 / RIB 40) (Yellow koji mold).